A 150-amino-acid polypeptide reads, in one-letter code: Large ribosomal subunit protein bL9 (150 aa).

The protein belongs to the bacterial ribosomal protein bL9 family.

In terms of biological role, binds to the 23S rRNA. This chain is Large ribosomal subunit protein bL9, found in Streptococcus equi subsp. equi (strain 4047).